Consider the following 208-residue polypeptide: FMN-dependent NADH:quinone oxidoreductase 1 (208 aa).

Serine 10 serves as a coordination point for FMN.

The protein belongs to the azoreductase type 1 family. Homodimer. The cofactor is FMN.

The catalysed reaction is 2 a quinone + NADH + H(+) = 2 a 1,4-benzosemiquinone + NAD(+). It catalyses the reaction N,N-dimethyl-1,4-phenylenediamine + anthranilate + 2 NAD(+) = 2-(4-dimethylaminophenyl)diazenylbenzoate + 2 NADH + 2 H(+). Functionally, quinone reductase that provides resistance to thiol-specific stress caused by electrophilic quinones. Contributes to resistance to 2-methylhydroquinone (2-MHQ) and catechol. Its function is as follows. Also exhibits azoreductase activity. Catalyzes the reductive cleavage of the azo bond in aromatic azo compounds to the corresponding amines. The polypeptide is FMN-dependent NADH:quinone oxidoreductase 1 (Bacillus subtilis (strain 168)).